The chain runs to 199 residues: N-(5'-phosphoribosyl)anthranilate isomerase (199 aa).

The protein belongs to the TrpF family.

The catalysed reaction is N-(5-phospho-beta-D-ribosyl)anthranilate = 1-(2-carboxyphenylamino)-1-deoxy-D-ribulose 5-phosphate. The protein operates within amino-acid biosynthesis; L-tryptophan biosynthesis; L-tryptophan from chorismate: step 3/5. This chain is N-(5'-phosphoribosyl)anthranilate isomerase, found in Lacticaseibacillus paracasei (strain ATCC 334 / BCRC 17002 / CCUG 31169 / CIP 107868 / KCTC 3260 / NRRL B-441) (Lactobacillus paracasei).